Here is a 234-residue protein sequence, read N- to C-terminus: LexA repressor (234 aa).

The segment at residues 26–46 is a DNA-binding region (H-T-H motif); sequence FEEMKEALDLKSKSGVHRLIS. A disordered region spans residues 73-100; it reads AVGKAAPVSQREAANTNSALPPLRAAPK. Low complexity predominate over residues 91–100; sequence ALPPLRAAPK. Active-site for autocatalytic cleavage activity residues include Ser154 and Lys192.

The protein belongs to the peptidase S24 family. In terms of assembly, homodimer.

The enzyme catalyses Hydrolysis of Ala-|-Gly bond in repressor LexA.. In terms of biological role, represses a number of genes involved in the response to DNA damage (SOS response), including recA and lexA. In the presence of single-stranded DNA, RecA interacts with LexA causing an autocatalytic cleavage which disrupts the DNA-binding part of LexA, leading to derepression of the SOS regulon and eventually DNA repair. The chain is LexA repressor from Novosphingobium aromaticivorans (strain ATCC 700278 / DSM 12444 / CCUG 56034 / CIP 105152 / NBRC 16084 / F199).